The following is a 383-amino-acid chain: Acetylornithine deacetylase (383 aa).

His80 lines the Zn(2+) pocket. Residue Asp82 is part of the active site. Asp112 is a Zn(2+) binding site. The active site involves Glu144. Zn(2+) is bound by residues Glu145, Glu169, and His355.

The protein belongs to the peptidase M20A family. ArgE subfamily. As to quaternary structure, homodimer. It depends on Zn(2+) as a cofactor. Co(2+) is required as a cofactor. The cofactor is glutathione.

The protein resides in the cytoplasm. The catalysed reaction is N(2)-acetyl-L-ornithine + H2O = L-ornithine + acetate. The protein operates within amino-acid biosynthesis; L-arginine biosynthesis; L-ornithine from N(2)-acetyl-L-ornithine (linear): step 1/1. Catalyzes the hydrolysis of the amide bond of N(2)-acetylated L-amino acids. Cleaves the acetyl group from N-acetyl-L-ornithine to form L-ornithine, an intermediate in L-arginine biosynthesis pathway, and a branchpoint in the synthesis of polyamines. This Salmonella paratyphi A (strain ATCC 9150 / SARB42) protein is Acetylornithine deacetylase.